A 336-amino-acid polypeptide reads, in one-letter code: Dihydroorotate dehydrogenase (quinone) (336 aa).

Residues 62-66 (AGLDK) and threonine 86 contribute to the FMN site. Lysine 66 lines the substrate pocket. 111–115 (NRMGF) provides a ligand contact to substrate. Residues asparagine 139 and asparagine 172 each contribute to the FMN site. Asparagine 172 is a substrate binding site. Residue serine 175 is the Nucleophile of the active site. Position 177 (asparagine 177) interacts with substrate. Lysine 217 and threonine 245 together coordinate FMN. 246-247 (NT) provides a ligand contact to substrate. FMN-binding positions include glycine 268, glycine 297, and 318 to 319 (YS).

It belongs to the dihydroorotate dehydrogenase family. Type 2 subfamily. As to quaternary structure, monomer. Requires FMN as cofactor.

Its subcellular location is the cell membrane. It catalyses the reaction (S)-dihydroorotate + a quinone = orotate + a quinol. It functions in the pathway pyrimidine metabolism; UMP biosynthesis via de novo pathway; orotate from (S)-dihydroorotate (quinone route): step 1/1. Catalyzes the conversion of dihydroorotate to orotate with quinone as electron acceptor. In Salmonella choleraesuis (strain SC-B67), this protein is Dihydroorotate dehydrogenase (quinone).